The primary structure comprises 202 residues: Inner membrane-spanning protein YciB (202 aa).

A run of 6 helical transmembrane segments spans residues 3-23 (ILFD…AGGN), 46-66 (ILLA…WVWM), 73-93 (TMLW…LFFH), 100-120 (WKPT…AVIF), 145-165 (LAWA…AYNF), and 173-193 (FKLF…GFYL).

It belongs to the YciB family.

It localises to the cell inner membrane. Plays a role in cell envelope biogenesis, maintenance of cell envelope integrity and membrane homeostasis. The polypeptide is Inner membrane-spanning protein YciB (Aromatoleum aromaticum (strain DSM 19018 / LMG 30748 / EbN1) (Azoarcus sp. (strain EbN1))).